Here is a 220-residue protein sequence, read N- to C-terminus: UPF0502 protein PSPPH_2577 (220 aa).

This sequence belongs to the UPF0502 family.

In Pseudomonas savastanoi pv. phaseolicola (strain 1448A / Race 6) (Pseudomonas syringae pv. phaseolicola (strain 1448A / Race 6)), this protein is UPF0502 protein PSPPH_2577.